Reading from the N-terminus, the 741-residue chain is Zinc metalloproteinase nas-30 (741 aa).

Composition is skewed to low complexity over residues 71 to 85 (KPAP…APAP) and 97 to 118 (PAPK…DAPP). A disordered region spans residues 71–122 (KPAPAAAGPRSAPAPTNEDYNTDIDVPAPKAKARAAPTPRRAQADAPPVYRQ). The 193-residue stretch at 324 to 516 (KVITGSVYRW…VKQVNRLYCN (193 aa)) folds into the Peptidase M12A domain. 6 disulfide bridges follow: C364–C515, C385–C404, C519–C539, C541–C550, C562–C583, and C610–C630. H412 serves as a coordination point for Zn(2+). E413 is an active-site residue. The Zn(2+) site is built by H416 and H422. Positions 539-550 (CKCPDGLGGKLC) constitute an EGF-like domain. In terms of domain architecture, CUB spans 550–648 (CGRAAKGTDH…ISDQSEALIL (99 aa)). N633 carries an N-linked (GlcNAc...) asparagine glycan.

Requires Zn(2+) as cofactor.

Its function is as follows. Metalloprotease. The protein is Zinc metalloproteinase nas-30 of Caenorhabditis elegans.